The primary structure comprises 390 residues: Adherens junction-associated protein 1 (390 aa).

The signal sequence occupies residues 1 to 37 (MWITQLLGIRSGPPLGSHAWILIAIFQLAMDFIICES). Topologically, residues 38-262 (ESPGKAYKHL…NDTSGLAVHQ (225 aa)) are extracellular. Residues 218–253 (LQNPGIHNGKKSPGRISTTDPNPGNGKTARPPRIPN) form a disordered region. The chain crosses the membrane as a helical span at residues 263 to 283 (IITITVSLIMVIAALITTLVL). Positions 283-390 (LKNCCAQSGN…VSEKWFEISC (108 aa)) are targeting signals. Over 284 to 390 (KNCCAQSGNA…VSEKWFEISC (107 aa)) the chain is Cytoplasmic.

Its subcellular location is the basolateral cell membrane. The protein localises to the apical cell membrane. It localises to the cell junction. The protein resides in the adherens junction. May play a role in cell adhesion and cell migration. The polypeptide is Adherens junction-associated protein 1 (ajap1) (Xenopus tropicalis (Western clawed frog)).